The chain runs to 453 residues: MSLAARDDTIAAIATAVAAGAGSVAIVRISGPQAEAIGRQLFQPAGKQSWESHRVLYGHVNDPANGDVVDEVLLLLMRAPRSFTRETVVEFHGHGGLVAVQRLLELVLAAGARRALPGEFSQRAFLNGRLDLTRAEAISELVSARSRRAAELAMAGLDGGLQQRIEALRDQLLDQLCELEARVDFEEDLPSLDGAAVCTALRDVQQALDQLVLDGQQAQLLRDGLRVAIIGRPNVGKSSLLNALSGHERAIVTDLPGTTRDLLDYDLVLQGVPITLLDTAGIRSTADRVEQLGIERSRAAFASADAVVLLYDLSRGWSPDDSALRNEVPDGTPLLVVGNKSDLAAEPATTQGLAISARSGLGLAELSSALLKLCGLSGEGQGLLLALNQRQCDLAAAASAALGRSQQAARDGLPWDFWTIDLREAIRALGEITGAEITEAVLDRVFSRFCIGK.

Residues R28, E90, and R129 each coordinate (6S)-5-formyl-5,6,7,8-tetrahydrofolate. The 152-residue stretch at 224–375 (GLRVAIIGRP…LSSALLKLCG (152 aa)) folds into the TrmE-type G domain. A K(+)-binding site is contributed by N234. GTP is bound by residues 234 to 239 (NVGKSS), 253 to 259 (TDLPGTT), 278 to 281 (DTAG), and 356 to 358 (SAR). S238 is a Mg(2+) binding site. K(+) contacts are provided by T253, L255, and T258. T259 contacts Mg(2+). K453 is a binding site for (6S)-5-formyl-5,6,7,8-tetrahydrofolate.

It belongs to the TRAFAC class TrmE-Era-EngA-EngB-Septin-like GTPase superfamily. TrmE GTPase family. In terms of assembly, homodimer. Heterotetramer of two MnmE and two MnmG subunits. The cofactor is K(+).

Its subcellular location is the cytoplasm. Its function is as follows. Exhibits a very high intrinsic GTPase hydrolysis rate. Involved in the addition of a carboxymethylaminomethyl (cmnm) group at the wobble position (U34) of certain tRNAs, forming tRNA-cmnm(5)s(2)U34. This chain is tRNA modification GTPase MnmE, found in Synechococcus sp. (strain RCC307).